The chain runs to 92 residues: Putative lambdoid prophage defective integrase (92 aa).

This sequence belongs to the 'phage' integrase family.

The chain is Putative lambdoid prophage defective integrase (intG) from Escherichia coli O157:H7.